We begin with the raw amino-acid sequence, 172 residues long: Ribosome maturation factor RimM (172 aa).

The PRC barrel domain occupies 99–171 (DDIPTWNYFI…LLTVEVPDGL (73 aa)).

This sequence belongs to the RimM family. Binds ribosomal protein uS19.

The protein localises to the cytoplasm. Its function is as follows. An accessory protein needed during the final step in the assembly of 30S ribosomal subunit, possibly for assembly of the head region. Essential for efficient processing of 16S rRNA. May be needed both before and after RbfA during the maturation of 16S rRNA. It has affinity for free ribosomal 30S subunits but not for 70S ribosomes. This chain is Ribosome maturation factor RimM, found in Phocaeicola vulgatus (strain ATCC 8482 / DSM 1447 / JCM 5826 / CCUG 4940 / NBRC 14291 / NCTC 11154) (Bacteroides vulgatus).